The sequence spans 237 residues: UPF0758 protein Aave_3773 (237 aa).

Positions 115–237 (LFHSPRAVRD…SLSMAEEGLI (123 aa)) constitute an MPN domain. Residues histidine 186, histidine 188, and aspartate 199 each coordinate Zn(2+). The JAMM motif signature appears at 186-199 (HNHPSGQVQPSRAD).

It belongs to the UPF0758 family.

The chain is UPF0758 protein Aave_3773 from Paracidovorax citrulli (strain AAC00-1) (Acidovorax citrulli).